A 99-amino-acid chain; its full sequence is Malonate decarboxylase acyl carrier protein (99 aa).

An O-(phosphoribosyl dephospho-coenzyme A)serine modification is found at serine 25.

It belongs to the MdcC family. Covalently binds the prosthetic group of malonate decarboxylase.

The protein localises to the cytoplasm. Subunit of malonate decarboxylase, it is an acyl carrier protein to which acetyl and malonyl thioester residues are bound via a 2'-(5''-phosphoribosyl)-3'-dephospho-CoA prosthetic group and turn over during the catalytic mechanism. This is Malonate decarboxylase acyl carrier protein from Pseudomonas aeruginosa (strain LESB58).